The following is a 406-amino-acid chain: Tryptophan 2,3-dioxygenase (406 aa).

Phosphoserine is present on serine 19. Substrate is bound by residues 72–76 (FIITH) and arginine 144. Heme is bound at residue histidine 328. Threonine 342 provides a ligand contact to substrate.

This sequence belongs to the tryptophan 2,3-dioxygenase family. Homotetramer. Dimer of dimers. It depends on heme as a cofactor.

The catalysed reaction is L-tryptophan + O2 = N-formyl-L-kynurenine. The protein operates within amino-acid degradation; L-tryptophan degradation via kynurenine pathway; L-kynurenine from L-tryptophan: step 1/2. In terms of biological role, heme-dependent dioxygenase that catalyzes the oxidative cleavage of the L-tryptophan (L-Trp) pyrrole ring and converts L-tryptophan to N-formyl-L-kynurenine. Catalyzes the oxidative cleavage of the indole moiety. This is Tryptophan 2,3-dioxygenase from Mus musculus (Mouse).